A 485-amino-acid chain; its full sequence is MKPTIALVGRPNVGKSTLFNRLTRTKDALVHDLPGLTRDRHYGHGKVGSKPYLVIDTGGFEPVVDSGILHEMAKQTLQAVDEADAVVFLVDGRTGLTPQDKIIADRLRQSPRPVYLAVNKGEGGNRAVLAAEFYELALGDPYVISGAHGDGVYYLIEDILETFPEPEAEEADAKHPVFAVIGRPNVGKSTLVNAILGEERVIAFDMAGTTRDSIHIDFEREGKPFTIIDTAGVRRRGKVDEAVEKFSVIKAMQAVEAANVAVLVLDAQQDIADQDATIAGFALEAGRALVVAVNKWDGISEERREQVKRDINRKLYFLDFAKFHFISALKERGIDGLFDSIQAAYNAAMIKMPTPKITRVLQSAIERQQPPRAGLVRPKMRYAHQGGMNPPVIVVHGNSLHAISDSYTRYLTQTFRKAFNLQGTPLRIQYNVSENPYENAEDKPKKKPLRRVSLSNRIEKREGRKEEKNRFKKKTKVSVKKQFSK.

EngA-type G domains follow at residues Pro-3–Glu-167 and Pro-176–Met-349. Residues Gly-9–Ser-16, Asp-56–Phe-60, Asn-119–Glu-122, Gly-182–Ser-189, Asp-229–Val-233, and Asn-294–Asp-297 contribute to the GTP site. Residues Ile-350–Glu-434 enclose the KH-like domain. Residues Asn-435 to Lys-485 are disordered. A compositionally biased stretch (basic and acidic residues) spans Arg-457–Asn-469. A compositionally biased stretch (basic residues) spans Arg-470–Lys-485.

The protein belongs to the TRAFAC class TrmE-Era-EngA-EngB-Septin-like GTPase superfamily. EngA (Der) GTPase family. In terms of assembly, associates with the 50S ribosomal subunit.

In terms of biological role, GTPase that plays an essential role in the late steps of ribosome biogenesis. The sequence is that of GTPase Der from Neisseria meningitidis serogroup C / serotype 2a (strain ATCC 700532 / DSM 15464 / FAM18).